We begin with the raw amino-acid sequence, 202 residues long: MLDLLKISVTGDPSSGKTEACQVFEELGAFVISADKVSHSFLVPYTSEGQRVVDLLGPEIIVENTLNRKAIAKKVFGNRDLLLSLEKILHPGVCRFVEENYTQVVQAQKYSLFVVEVPLLYEIQYADWFDRVILISADTEIRKERFLKKTGGSDTSFDLRCARFSSLEEKILRADVVIENNGTKEEFRHKVKQCFKALKGTI.

Residues 6 to 202 (KISVTGDPSS…QCFKALKGTI (197 aa)) enclose the DPCK domain. Residue 14–19 (SSGKTE) participates in ATP binding.

This sequence belongs to the CoaE family.

It is found in the cytoplasm. It catalyses the reaction 3'-dephospho-CoA + ATP = ADP + CoA + H(+). It functions in the pathway cofactor biosynthesis; coenzyme A biosynthesis; CoA from (R)-pantothenate: step 5/5. Its function is as follows. Catalyzes the phosphorylation of the 3'-hydroxyl group of dephosphocoenzyme A to form coenzyme A. The protein is Dephospho-CoA kinase of Chlamydia muridarum (strain MoPn / Nigg).